A 399-amino-acid chain; its full sequence is Serine/threonine-protein kinase PKZ1 (399 aa).

Residues 30–50 (PMQCAYQTQSHSNPEGAKRGR) form a disordered region. In terms of domain architecture, Protein kinase spans 92–371 (WQLFDQIGAG…ADQMLQHPWM (280 aa)). ATP-binding positions include 98 to 106 (IGAGAFGVV) and Lys121. The active-site Proton acceptor is the Asp219.

The protein belongs to the protein kinase superfamily. CAMK Ser/Thr protein kinase family.

The catalysed reaction is L-seryl-[protein] + ATP = O-phospho-L-seryl-[protein] + ADP + H(+). It carries out the reaction L-threonyl-[protein] + ATP = O-phospho-L-threonyl-[protein] + ADP + H(+). Its function is as follows. May regulate an early stage of the zoospore pathway. In Phytophthora infestans (strain T30-4) (Potato late blight agent), this protein is Serine/threonine-protein kinase PKZ1.